We begin with the raw amino-acid sequence, 797 residues long: Outer membrane protein assembly factor BamA (797 aa).

An N-terminal signal peptide occupies residues 1 to 19; it reads MKKLLIASLLFGTTTTVFA. POTRA domains are found at residues 22–89, 90–170, 173–259, 262–341, and 344–418; these read FVAK…VVAK, SIIS…INED, AKLA…VNEG, YDLR…VDAG, and LTVR…VKER.

The protein belongs to the BamA family. In terms of assembly, part of the Bam complex.

The protein resides in the cell outer membrane. Functionally, part of the outer membrane protein assembly complex, which is involved in assembly and insertion of beta-barrel proteins into the outer membrane. The polypeptide is Outer membrane protein assembly factor BamA (Haemophilus influenzae).